The primary structure comprises 642 residues: Mini-chromosome maintenance complex-binding protein (642 aa).

Positions 151 to 161 (ARVSPSTSYTP) are enriched in polar residues. Positions 151-196 (ARVSPSTSYTPSRHKRSYEDDEDMDLQPSKQKEQHPGSRQAGGLGG) are disordered. The residue at position 154 (Ser154) is a Phosphoserine. The residue at position 160 (Thr160) is a Phosphothreonine. Residues Ser167 and Ser298 each carry the phosphoserine modification.

It belongs to the MCMBP family. As to quaternary structure, interacts with the MCM complex: associates with the MCM3-7 complex which lacks MCM2, while it does not interact with the MCM complex when MCM2 is present (MCM2-7 complex). Interacts with the RPA complex, when composed of all RPA1, RPA2 and RPA3 components, but not with RPA1 or RPA2 alone.

Its subcellular location is the nucleus. Functionally, associated component of the MCM complex that acts as a regulator of DNA replication. Binds to the MCM complex during late S phase and promotes the disassembly of the MCM complex from chromatin, thereby acting as a key regulator of pre-replication complex (pre-RC) unloading from replicated DNA. Can dissociate the MCM complex without addition of ATP; probably acts by destabilizing interactions of each individual subunits of the MCM complex. Required for sister chromatid cohesion. The polypeptide is Mini-chromosome maintenance complex-binding protein (Mcmbp) (Mus musculus (Mouse)).